A 426-amino-acid polypeptide reads, in one-letter code: Glutamate-1-semialdehyde 2,1-aminomutase (426 aa).

Lys267 is subject to N6-(pyridoxal phosphate)lysine.

Belongs to the class-III pyridoxal-phosphate-dependent aminotransferase family. HemL subfamily. As to quaternary structure, homodimer. The cofactor is pyridoxal 5'-phosphate.

It localises to the cytoplasm. It catalyses the reaction (S)-4-amino-5-oxopentanoate = 5-aminolevulinate. It functions in the pathway porphyrin-containing compound metabolism; protoporphyrin-IX biosynthesis; 5-aminolevulinate from L-glutamyl-tRNA(Glu): step 2/2. In Bdellovibrio bacteriovorus (strain ATCC 15356 / DSM 50701 / NCIMB 9529 / HD100), this protein is Glutamate-1-semialdehyde 2,1-aminomutase.